Reading from the N-terminus, the 361-residue chain is Chorismate synthase (361 aa).

Residues Arg-48 and Arg-54 each contribute to the NADP(+) site. Residues 125–127 (RSS), 238–239 (NA), Gly-278, 293–297 (KPTSS), and Arg-319 each bind FMN.

This sequence belongs to the chorismate synthase family. In terms of assembly, homotetramer. FMNH2 is required as a cofactor.

The enzyme catalyses 5-O-(1-carboxyvinyl)-3-phosphoshikimate = chorismate + phosphate. It participates in metabolic intermediate biosynthesis; chorismate biosynthesis; chorismate from D-erythrose 4-phosphate and phosphoenolpyruvate: step 7/7. In terms of biological role, catalyzes the anti-1,4-elimination of the C-3 phosphate and the C-6 proR hydrogen from 5-enolpyruvylshikimate-3-phosphate (EPSP) to yield chorismate, which is the branch point compound that serves as the starting substrate for the three terminal pathways of aromatic amino acid biosynthesis. This reaction introduces a second double bond into the aromatic ring system. The chain is Chorismate synthase from Pectobacterium carotovorum subsp. carotovorum (strain PC1).